Here is a 468-residue protein sequence, read N- to C-terminus: Uronate isomerase (468 aa).

The protein belongs to the metallo-dependent hydrolases superfamily. Uronate isomerase family.

It catalyses the reaction D-glucuronate = D-fructuronate. The catalysed reaction is aldehydo-D-galacturonate = keto-D-tagaturonate. Its pathway is carbohydrate metabolism; pentose and glucuronate interconversion. The protein is Uronate isomerase of Endomicrobium trichonymphae.